A 304-amino-acid polypeptide reads, in one-letter code: MIKQRTLKNVIRATGVGLHTGDIVYLTLRPAAVDTGIVFRRVDLDPPVEIKAREENVGDTTLSSTLVKEGVRIATVEHLLSAFAGLGIDNAYVDLNASEVPIMDGSAGPFVFLIQSAGIVQQEAPKRFILIKKTLLMEEEGKWARFEPFDGFKVSFVIDFDHPAFKGRPQGVEIDFSSTSFVKEVSRARTFGFMKDIERLREANLALGGSLNNAVVVDDYRVINEDGLRYEDEFARHKILDAIGDLYLLGHTLIGAFSGYKSGHALNNKLLCALMADKSAWEIVTFEDDETAAPILFTRPLTAA.

Zn(2+) contacts are provided by H78, H237, and D241. The Proton donor role is filled by H264.

It belongs to the LpxC family. It depends on Zn(2+) as a cofactor.

It catalyses the reaction a UDP-3-O-[(3R)-3-hydroxyacyl]-N-acetyl-alpha-D-glucosamine + H2O = a UDP-3-O-[(3R)-3-hydroxyacyl]-alpha-D-glucosamine + acetate. It functions in the pathway glycolipid biosynthesis; lipid IV(A) biosynthesis; lipid IV(A) from (3R)-3-hydroxytetradecanoyl-[acyl-carrier-protein] and UDP-N-acetyl-alpha-D-glucosamine: step 2/6. Its function is as follows. Catalyzes the hydrolysis of UDP-3-O-myristoyl-N-acetylglucosamine to form UDP-3-O-myristoylglucosamine and acetate, the committed step in lipid A biosynthesis. This is UDP-3-O-acyl-N-acetylglucosamine deacetylase from Nitrosococcus oceani (strain ATCC 19707 / BCRC 17464 / JCM 30415 / NCIMB 11848 / C-107).